A 459-amino-acid chain; its full sequence is Exodeoxyribonuclease 7 large subunit (459 aa).

This sequence belongs to the XseA family. As to quaternary structure, heterooligomer composed of large and small subunits.

The protein resides in the cytoplasm. It carries out the reaction Exonucleolytic cleavage in either 5'- to 3'- or 3'- to 5'-direction to yield nucleoside 5'-phosphates.. Functionally, bidirectionally degrades single-stranded DNA into large acid-insoluble oligonucleotides, which are then degraded further into small acid-soluble oligonucleotides. The chain is Exodeoxyribonuclease 7 large subunit from Pseudomonas aeruginosa (strain ATCC 15692 / DSM 22644 / CIP 104116 / JCM 14847 / LMG 12228 / 1C / PRS 101 / PAO1).